Consider the following 224-residue polypeptide: Inhibitor of apoptosis protein (224 aa).

The stretch at 29–92 (VDARNKSFAI…GFWSRNCGFM (64 aa)) is one BIR repeat. 4 residues coordinate Zn(2+): cysteine 62, cysteine 65, histidine 82, and cysteine 89. Residues 189–207 (CMTCGIEQINKDENFCSAC) form a C4-type zinc finger.

This sequence belongs to the asfivirus IAP family. As to quaternary structure, interacts with subunit p17 of host CASP3.

The protein resides in the host cytoplasm. It is found in the virion. Prevents apoptosis of host cell by inhibiting caspase-3/CASP3 activation to promote the viral replication. Also induces the activation of host NF-kappaB. The sequence is that of Inhibitor of apoptosis protein from Ornithodoros (relapsing fever ticks).